Reading from the N-terminus, the 1378-residue chain is DNA-directed RNA polymerase subunit beta' (1378 aa).

Zn(2+)-binding residues include Cys69, Cys71, Cys84, and Cys87. Mg(2+)-binding residues include Asp460, Asp462, and Asp464. Zn(2+)-binding residues include Cys808, Cys882, Cys889, and Cys892.

Belongs to the RNA polymerase beta' chain family. In terms of assembly, the RNAP catalytic core consists of 2 alpha, 1 beta, 1 beta' and 1 omega subunit. When a sigma factor is associated with the core the holoenzyme is formed, which can initiate transcription. Mg(2+) is required as a cofactor. It depends on Zn(2+) as a cofactor.

It carries out the reaction RNA(n) + a ribonucleoside 5'-triphosphate = RNA(n+1) + diphosphate. In terms of biological role, DNA-dependent RNA polymerase catalyzes the transcription of DNA into RNA using the four ribonucleoside triphosphates as substrates. This Rickettsia canadensis (strain McKiel) protein is DNA-directed RNA polymerase subunit beta'.